Here is a 133-residue protein sequence, read N- to C-terminus: Small ribosomal subunit protein uS19 (133 aa).

Belongs to the universal ribosomal protein uS19 family. Part of the 30S ribosomal subunit.

In terms of biological role, protein S19 forms a complex with S13 that binds strongly to the 16S ribosomal RNA. The polypeptide is Small ribosomal subunit protein uS19 (Thermococcus kodakarensis (strain ATCC BAA-918 / JCM 12380 / KOD1) (Pyrococcus kodakaraensis (strain KOD1))).